The following is a 148-amino-acid chain: MPKALIVYGSTTGNTEYTAETIARELADAGYEVDSRDAASVEAGGLFEGFDLVLLGCSTWGDDSIELQDDFIPLFDSLEETGAQGRKVACFGCGDSSYEYFCGAVDAIEEKLKNLGAEIVQDGLRIDGDPRAARDDIVGWAHDVRGAI.

One can recognise a Flavodoxin-like domain in the interval 4–145 (ALIVYGSTTG…DIVGWAHDVR (142 aa)).

This sequence belongs to the flavodoxin family. Requires FMN as cofactor.

Functionally, low-potential electron donor to a number of redox enzymes. The protein is Flavodoxin of Nitratidesulfovibrio vulgaris (strain ATCC 29579 / DSM 644 / CCUG 34227 / NCIMB 8303 / VKM B-1760 / Hildenborough) (Desulfovibrio vulgaris).